Reading from the N-terminus, the 163-residue chain is MCWRPLCRLWSYLVYVQAVPCQIFQDDTKTLIKTIVTRINDISHTSVSAKQRVTGLDFIPGLHPILSLSKMDQTLAVYQQVLTSLPSQNVLQIANDLENLRDLLHLLAFSKSCSLPQTSGLQKPESLDGVLEASLYSTEVVALSRLQGSLQDILQQLDISPEC.

A signal peptide spans 1-18 (MCWRPLCRLWSYLVYVQA). Cysteines 113 and 163 form a disulfide.

This sequence belongs to the leptin family. In terms of tissue distribution, not exclusively localized in adipose tissue but is also expressed in liver.

The protein localises to the secreted. In terms of biological role, key player in the regulation of energy balance and body weight control. Once released into the circulation, has central and peripheral effects by binding LEPR, found in many tissues, which results in the activation of several major signaling pathways. The polypeptide is Leptin (LEP) (Gallus gallus (Chicken)).